The following is a 111-amino-acid chain: Small ribosomal subunit protein uS17 (111 aa).

It belongs to the universal ribosomal protein uS17 family. Part of the 30S ribosomal subunit.

In terms of biological role, one of the primary rRNA binding proteins, it binds specifically to the 5'-end of 16S ribosomal RNA. In Methanocella arvoryzae (strain DSM 22066 / NBRC 105507 / MRE50), this protein is Small ribosomal subunit protein uS17.